The following is a 437-amino-acid chain: tRNA-2-methylthio-N(6)-dimethylallyladenosine synthase (437 aa).

The region spanning 3–120 is the MTTase N-terminal domain; it reads RKLFIETHGC…LPEMIDAART (118 aa). Residues Cys12, Cys49, Cys83, Cys157, Cys161, and Cys164 each contribute to the [4Fe-4S] cluster site. The region spanning 143-370 is the Radical SAM core domain; the sequence is RVDGPSAYVS…QQRINQQGFE (228 aa). Residues 373–437 form the TRAM domain; the sequence is RRMVGTTQRI…PHSLRGSLLS (65 aa).

The protein belongs to the methylthiotransferase family. MiaB subfamily. As to quaternary structure, monomer. [4Fe-4S] cluster serves as cofactor.

Its subcellular location is the cytoplasm. The enzyme catalyses N(6)-dimethylallyladenosine(37) in tRNA + (sulfur carrier)-SH + AH2 + 2 S-adenosyl-L-methionine = 2-methylsulfanyl-N(6)-dimethylallyladenosine(37) in tRNA + (sulfur carrier)-H + 5'-deoxyadenosine + L-methionine + A + S-adenosyl-L-homocysteine + 2 H(+). Catalyzes the methylthiolation of N6-(dimethylallyl)adenosine (i(6)A), leading to the formation of 2-methylthio-N6-(dimethylallyl)adenosine (ms(2)i(6)A) at position 37 in tRNAs that read codons beginning with uridine. The sequence is that of tRNA-2-methylthio-N(6)-dimethylallyladenosine synthase from Stutzerimonas stutzeri (strain A1501) (Pseudomonas stutzeri).